Here is a 232-residue protein sequence, read N- to C-terminus: Acetate--CoA ligase [ADP-forming] I subunit beta (232 aa).

Residues 27–63 (KEILKLYGIPVPEFKVARNEEEAVKFSGEIGYPVVMK) enclose the ATP-grasp domain. 53-64 (SGEIGYPVVMKI) is a binding site for ATP.

Belongs to the acetate CoA ligase beta subunit family. In terms of assembly, heterotetramer of two alpha and two beta subunits.

It is found in the cytoplasm. It carries out the reaction acetate + ATP + CoA = acetyl-CoA + ADP + phosphate. Activity is dependent on magnesium. Functionally, catalyzes the reversible formation of acetate and ATP from acetyl-CoA by using ADP and phosphate. Can use other substrates such as isobutyryl-CoA, propionyl-CoA and butyryl-CoA, but not indoleacetyl-CoA, phenylacetyl-CoA or succinyl-CoA. Seems to be involved primarily in the conversion of acetyl-CoA to acetate. Participates in the degradation of branched-chain amino acids via branched-chain-acyl-CoA esters. The sequence is that of Acetate--CoA ligase [ADP-forming] I subunit beta from Pyrococcus furiosus (strain ATCC 43587 / DSM 3638 / JCM 8422 / Vc1).